Reading from the N-terminus, the 220-residue chain is Large ribosomal subunit protein bL25 (220 aa).

Acidic residues predominate over residues 186-199 (ELEDEDEDEDEVAA). The segment at 186 to 220 (ELEDEDEDEDEVAADEVPATEVDDQAAVKEGEGKE) is disordered. Positions 211-220 (AAVKEGEGKE) are enriched in basic and acidic residues.

Belongs to the bacterial ribosomal protein bL25 family. CTC subfamily. In terms of assembly, part of the 50S ribosomal subunit; part of the 5S rRNA/L5/L18/L25 subcomplex. Contacts the 5S rRNA. Binds to the 5S rRNA independently of L5 and L18.

Its function is as follows. This is one of the proteins that binds to the 5S RNA in the ribosome where it forms part of the central protuberance. The sequence is that of Large ribosomal subunit protein bL25 from Christiangramia forsetii (strain DSM 17595 / CGMCC 1.15422 / KT0803) (Gramella forsetii).